We begin with the raw amino-acid sequence, 416 residues long: Formyl-CoA:oxalate CoA-transferase (416 aa).

CoA is bound by residues 17 to 18 (QS), Arg38, 72 to 75 (LNTK), 96 to 98 (NFH), His104, and 137 to 140 (KAYE). Catalysis depends on Asp169, which acts as the Nucleophile. Substrate is bound at residue 248 to 250 (GGQ). 273 to 275 (QEQ) provides a ligand contact to CoA.

This sequence belongs to the CoA-transferase III family. Frc subfamily. As to quaternary structure, homodimer.

It catalyses the reaction formyl-CoA + oxalate = oxalyl-CoA + formate. It functions in the pathway metabolic intermediate degradation; oxalate degradation; CO(2) and formate from oxalate: step 1/2. Involved in the catabolism of oxalate and in the adapatation to low pH via the induction of the oxalate-dependent acid tolerance response (ATR). Catalyzes the transfer of the CoA moiety from formyl-CoA to oxalate. This chain is Formyl-CoA:oxalate CoA-transferase, found in Shigella sonnei (strain Ss046).